The following is an 868-amino-acid chain: MHEQYTPRDVEAAAQNAWDEQQSFAVTEQPGKETYYCLSMFPYPSGKLHMGHVRNYTIGDVIARYQRMLGKNVLQPMGWDAFGMPAENAAMKNNVAPAKWTYENIDYMKTQLKSLGLAIDWSREVTTCKPDYYRWEQWLFTRLFEKGVIYRKNGTVNWDPADQTVLANEQVIDGRGWRSGALIEKREIPMYYFRITDYADELLESLDELPGWPEQVKTMQRNWIGKSRGMEVQFPYDQASIGHEGTLKVFTTRPDTLMGATYVAVAAEHPLATQAAQGNAALQAFIDECKSGSVAEADMATQEKKGMATSLFVEHPLTGEKLPVWVANYVLMHYGDGAVMAVPAHDERDFEFAHKYNLPVKAVVRTSAGDDVGSEWLAAYGEHGQLINSGEFDGLDFQGAFDAIEAALIRKDLGKSRTQFRLRDWGISRQRYWGCPIPIIHCPSCGDVPVPEDQLPVTLPENVVPDGAGSPLARMPEFYECTCPKCGTAAKRETDTMDTFVESSWYFARYASPNYDKGLVDPKAANHWLPVDQYIGGIEHAILHLLYARFFHKLMRDEGLVTSNEPFKNLLTQGMVVAETYYRVASNGGKDWFNPADVEIERDAKAKIIGARLKTDGLPVEIGGTEKMSKSKNNGVDPQSMIEQYGADTCRLFMMFASPPDMSLEWSDSGVEGASRFLRRVWRLAQAHVAQGLPGQLDIAALSDEQKVIRRAIHAAIKQASTDVGQFHKFNTAIAQVMTVMNVLEKAPQVTAQDRALLQEGLEAVTLLLAPITPHISHELWKQLGHEQAVIDATWPSVDESALVQDTVTLVVQVNGKLRGQVEMPAAASREEIEAAARNNENVLRFTDGLTIRKVIVVPGKLVNIVAN.

The short motif at 42 to 52 is the 'HIGH' region element; it reads PYPSGKLHMGH. The 'KMSKS' region signature appears at 627-631; the sequence is KMSKS. Lys-630 serves as a coordination point for ATP.

The protein belongs to the class-I aminoacyl-tRNA synthetase family.

It is found in the cytoplasm. It catalyses the reaction tRNA(Leu) + L-leucine + ATP = L-leucyl-tRNA(Leu) + AMP + diphosphate. The protein is Leucine--tRNA ligase of Pseudomonas entomophila (strain L48).